We begin with the raw amino-acid sequence, 94 residues long: FXYD domain-containing ion transport regulator 6 (94 aa).

Positions 1-17 (METVLVLCSLLAPVVLA) are cleaved as a signal peptide. The Extracellular portion of the chain corresponds to 18 to 34 (SAAEKEKEKDPFYYDYQ). Residues 35–57 (TLRIGGLVFAVVLFSVGILLILS) form a helical membrane-spanning segment. At 58-94 (RRCKCSFNQKPRAPGDEEAQVENLITTNAAEPQKAEN) the chain is on the cytoplasmic side.

It belongs to the FXYD family. In terms of assembly, regulatory subunit of the sodium/potassium-transporting ATPase which is composed of a catalytic alpha subunit, a non-catalytic beta subunit and an additional regulatory subunit. The regulatory subunit, a member of the FXYD protein family, modulates the enzymatic activity in a tissue- and isoform-specific way by changing affinities of the Na+/K+-ATPase toward Na(+), K(+) or ATP.

The protein localises to the cell membrane. Associates with and regulates the activity of the sodium/potassium-transporting ATPase (NKA) which catalyzes the hydrolysis of ATP coupled with the exchange of Na(+) and K(+) ions across the plasma membrane. Reduces the apparent affinity for intracellular Na(+) with no change in the apparent affinity for extracellular K(+). In addition to modulating NKA kinetics, may also function as a regulator of NKA localization to the plasma membrane. The polypeptide is FXYD domain-containing ion transport regulator 6 (Fxyd6) (Mus musculus (Mouse)).